The chain runs to 155 residues: Ribosome maturation factor RimP (155 aa).

The protein belongs to the RimP family.

Its subcellular location is the cytoplasm. Its function is as follows. Required for maturation of 30S ribosomal subunits. This chain is Ribosome maturation factor RimP, found in Synechococcus sp. (strain WH7803).